Here is a 60-residue protein sequence, read N- to C-terminus: Large ribosomal subunit protein bL32 (60 aa).

A compositionally biased stretch (basic residues) spans Met1 to His19. Residues Met1–Lys20 are disordered.

It belongs to the bacterial ribosomal protein bL32 family.

The polypeptide is Large ribosomal subunit protein bL32 (Gemmatimonas aurantiaca (strain DSM 14586 / JCM 11422 / NBRC 100505 / T-27)).